The sequence spans 176 residues: Cytochrome b (176 aa).

A run of 3 helical transmembrane segments spans residues 33-53, 77-98, and 113-133; these read FGSLLGVCLAVQILTGLFLAM, WLLRYLHANGASMFFICLYLHV, and WNVGIILLFAVMATAFMGYVL. Heme b-binding residues include His-83 and His-97.

This sequence belongs to the cytochrome b family. As to quaternary structure, the cytochrome bc1 complex contains 11 subunits: 3 respiratory subunits (MT-CYB, CYC1 and UQCRFS1), 2 core proteins (UQCRC1 and UQCRC2) and 6 low-molecular weight proteins (UQCRH/QCR6, UQCRB/QCR7, UQCRQ/QCR8, UQCR10/QCR9, UQCR11/QCR10 and a cleavage product of UQCRFS1). This cytochrome bc1 complex then forms a dimer. The cofactor is heme b.

The protein resides in the mitochondrion inner membrane. Its function is as follows. Component of the ubiquinol-cytochrome c reductase complex (complex III or cytochrome b-c1 complex) that is part of the mitochondrial respiratory chain. The b-c1 complex mediates electron transfer from ubiquinol to cytochrome c. Contributes to the generation of a proton gradient across the mitochondrial membrane that is then used for ATP synthesis. The protein is Cytochrome b (MT-CYB) of Tadarida brasiliensis (Brazilian free-tailed bat).